The primary structure comprises 467 residues: Asparagine--tRNA ligase (467 aa).

It belongs to the class-II aminoacyl-tRNA synthetase family. Homodimer.

It is found in the cytoplasm. It catalyses the reaction tRNA(Asn) + L-asparagine + ATP = L-asparaginyl-tRNA(Asn) + AMP + diphosphate + H(+). The polypeptide is Asparagine--tRNA ligase (Histophilus somni (strain 129Pt) (Haemophilus somnus)).